The chain runs to 85 residues: UPF0386 protein MXAN_1729 (85 aa).

It belongs to the UPF0386 family.

This Myxococcus xanthus (strain DK1622) protein is UPF0386 protein MXAN_1729.